Here is a 314-residue protein sequence, read N- to C-terminus: Porphobilinogen deaminase (314 aa).

C249 carries the post-translational modification S-(dipyrrolylmethanemethyl)cysteine.

It belongs to the HMBS family. Monomer. Dipyrromethane is required as a cofactor.

The catalysed reaction is 4 porphobilinogen + H2O = hydroxymethylbilane + 4 NH4(+). It participates in porphyrin-containing compound metabolism; protoporphyrin-IX biosynthesis; coproporphyrinogen-III from 5-aminolevulinate: step 2/4. Its function is as follows. Tetrapolymerization of the monopyrrole PBG into the hydroxymethylbilane pre-uroporphyrinogen in several discrete steps. This chain is Porphobilinogen deaminase, found in Brucella abortus (strain S19).